Reading from the N-terminus, the 607-residue chain is Dihydroxy-acid dehydratase (607 aa).

Residue Asp-81 participates in Mg(2+) binding. A [2Fe-2S] cluster-binding site is contributed by Cys-122. 2 residues coordinate Mg(2+): Asp-123 and Lys-124. The residue at position 124 (Lys-124) is an N6-carboxylysine. A [2Fe-2S] cluster-binding site is contributed by Cys-195. Residue Glu-489 participates in Mg(2+) binding. The Proton acceptor role is filled by Ser-515.

It belongs to the IlvD/Edd family. Homodimer. [2Fe-2S] cluster is required as a cofactor. It depends on Mg(2+) as a cofactor.

The catalysed reaction is (2R)-2,3-dihydroxy-3-methylbutanoate = 3-methyl-2-oxobutanoate + H2O. The enzyme catalyses (2R,3R)-2,3-dihydroxy-3-methylpentanoate = (S)-3-methyl-2-oxopentanoate + H2O. It functions in the pathway amino-acid biosynthesis; L-isoleucine biosynthesis; L-isoleucine from 2-oxobutanoate: step 3/4. The protein operates within amino-acid biosynthesis; L-valine biosynthesis; L-valine from pyruvate: step 3/4. Functions in the biosynthesis of branched-chain amino acids. Catalyzes the dehydration of (2R,3R)-2,3-dihydroxy-3-methylpentanoate (2,3-dihydroxy-3-methylvalerate) into 2-oxo-3-methylpentanoate (2-oxo-3-methylvalerate) and of (2R)-2,3-dihydroxy-3-methylbutanoate (2,3-dihydroxyisovalerate) into 2-oxo-3-methylbutanoate (2-oxoisovalerate), the penultimate precursor to L-isoleucine and L-valine, respectively. This is Dihydroxy-acid dehydratase from Deinococcus radiodurans (strain ATCC 13939 / DSM 20539 / JCM 16871 / CCUG 27074 / LMG 4051 / NBRC 15346 / NCIMB 9279 / VKM B-1422 / R1).